We begin with the raw amino-acid sequence, 417 residues long: Gamma-glutamyl phosphate reductase (417 aa).

This sequence belongs to the gamma-glutamyl phosphate reductase family.

Its subcellular location is the cytoplasm. The enzyme catalyses L-glutamate 5-semialdehyde + phosphate + NADP(+) = L-glutamyl 5-phosphate + NADPH + H(+). Its pathway is amino-acid biosynthesis; L-proline biosynthesis; L-glutamate 5-semialdehyde from L-glutamate: step 2/2. Its function is as follows. Catalyzes the NADPH-dependent reduction of L-glutamate 5-phosphate into L-glutamate 5-semialdehyde and phosphate. The product spontaneously undergoes cyclization to form 1-pyrroline-5-carboxylate. The sequence is that of Gamma-glutamyl phosphate reductase from Haemophilus influenzae (strain PittGG).